Reading from the N-terminus, the 847-residue chain is Alanine--tRNA ligase (847 aa).

Positions 554, 558, 656, and 660 each coordinate Zn(2+).

It belongs to the class-II aminoacyl-tRNA synthetase family. Requires Zn(2+) as cofactor.

The protein resides in the cytoplasm. It catalyses the reaction tRNA(Ala) + L-alanine + ATP = L-alanyl-tRNA(Ala) + AMP + diphosphate. Catalyzes the attachment of alanine to tRNA(Ala) in a two-step reaction: alanine is first activated by ATP to form Ala-AMP and then transferred to the acceptor end of tRNA(Ala). Also edits incorrectly charged Ser-tRNA(Ala) and Gly-tRNA(Ala) via its editing domain. This is Alanine--tRNA ligase from Helicobacter acinonychis (strain Sheeba).